The following is a 248-amino-acid chain: 5'-nucleotidase SurE (248 aa).

A divalent metal cation-binding residues include Asp-8, Asp-9, Ser-39, and Asn-91.

It belongs to the SurE nucleotidase family. It depends on a divalent metal cation as a cofactor.

The protein localises to the cytoplasm. The enzyme catalyses a ribonucleoside 5'-phosphate + H2O = a ribonucleoside + phosphate. In terms of biological role, nucleotidase that shows phosphatase activity on nucleoside 5'-monophosphates. This is 5'-nucleotidase SurE from Geotalea daltonii (strain DSM 22248 / JCM 15807 / FRC-32) (Geobacter daltonii).